A 189-amino-acid polypeptide reads, in one-letter code: dTTP/UTP pyrophosphatase (189 aa).

Aspartate 70 acts as the Proton acceptor in catalysis. A disulfide bridge connects residues cysteine 74 and cysteine 79.

Belongs to the Maf family. YhdE subfamily. Homodimer. The cofactor is a divalent metal cation.

Its subcellular location is the cytoplasm. The enzyme catalyses dTTP + H2O = dTMP + diphosphate + H(+). The catalysed reaction is UTP + H2O = UMP + diphosphate + H(+). It catalyses the reaction CTP + H2O = CMP + diphosphate + H(+). It carries out the reaction psi-UTP + H2O = psi-UMP + diphosphate + H(+). The enzyme catalyses 5-methyl-CTP + H2O = 5-methyl-CMP + diphosphate + H(+). The catalysed reaction is 5-methyl-UTP + H2O = 5-methyl-UMP + diphosphate + H(+). In terms of biological role, nucleoside triphosphate pyrophosphatase that hydrolyzes dTTP and UTP. Can also hydrolyze CTP and the modified nucleotides pseudo-UTP, 5-methyl-CTP (m(5)CTP) and 5-methyl-UTP (m(5)UTP). May have a dual role in cell division arrest and in preventing the incorporation of modified nucleotides into cellular nucleic acids. The sequence is that of dTTP/UTP pyrophosphatase from Bacillus subtilis (strain 168).